Consider the following 242-residue polypeptide: DnaJ homolog subfamily B member 3 (242 aa).

The J domain maps to 1–69 (MANYYEVLGV…KKRDVYDRYG (69 aa)).

Testis specific.

Its function is as follows. May operate as a co-chaperone of the male germ cell- and haploid stage-specific Hsp70 proteins. This Macaca fuscata fuscata (Japanese macaque) protein is DnaJ homolog subfamily B member 3 (DNAJB3).